Reading from the N-terminus, the 329-residue chain is NADH-quinone oxidoreductase subunit H 2 (329 aa).

8 helical membrane passes run 12–32 (GAKIALIFFVVLTLAAYLVFA), 78–98 (WLFYLAPAMAAVPAILTFAVI), 120–140 (VGLLFFLALSSIAVYGVALGG), 159–179 (LISYELSMGLSLVPTVMLAGS), 191–211 (GVWFIAYQPVAFLIFLISIAA), 242–262 (LFFVGEYINIIVLGGLATTFF), 270–290 (LLPPFVWFSVKTLAFAFFFIW), and 309–329 (KVLTPLALLNILITGWVLMFV).

The protein belongs to the complex I subunit 1 family. As to quaternary structure, NDH-1 is composed of 14 different subunits. Subunits NuoA, H, J, K, L, M, N constitute the membrane sector of the complex.

The protein resides in the cell inner membrane. The enzyme catalyses a quinone + NADH + 5 H(+)(in) = a quinol + NAD(+) + 4 H(+)(out). Functionally, NDH-1 shuttles electrons from NADH, via FMN and iron-sulfur (Fe-S) centers, to quinones in the respiratory chain. The immediate electron acceptor for the enzyme in this species is believed to be ubiquinone. Couples the redox reaction to proton translocation (for every two electrons transferred, four hydrogen ions are translocated across the cytoplasmic membrane), and thus conserves the redox energy in a proton gradient. This subunit may bind ubiquinone. In Geobacter sulfurreducens (strain ATCC 51573 / DSM 12127 / PCA), this protein is NADH-quinone oxidoreductase subunit H 2.